Here is a 703-residue protein sequence, read N- to C-terminus: Elongation factor G 1 (703 aa).

The tr-type G domain maps to 8–290 (ERYRNIGISA…AVIDFLPSPV (283 aa)). GTP is bound by residues 17–24 (AHIDAGKT), 88–92 (DTPGH), and 142–145 (NKMD).

Belongs to the TRAFAC class translation factor GTPase superfamily. Classic translation factor GTPase family. EF-G/EF-2 subfamily.

It is found in the cytoplasm. Its function is as follows. Catalyzes the GTP-dependent ribosomal translocation step during translation elongation. During this step, the ribosome changes from the pre-translocational (PRE) to the post-translocational (POST) state as the newly formed A-site-bound peptidyl-tRNA and P-site-bound deacylated tRNA move to the P and E sites, respectively. Catalyzes the coordinated movement of the two tRNA molecules, the mRNA and conformational changes in the ribosome. This is Elongation factor G 1 from Cupriavidus metallidurans (strain ATCC 43123 / DSM 2839 / NBRC 102507 / CH34) (Ralstonia metallidurans).